A 192-amino-acid polypeptide reads, in one-letter code: Ion-translocating oxidoreductase complex subunit A (192 aa).

6 helical membrane-spanning segments follow: residues 5-25 (LLLL…FLGL), 39-59 (IGMS…SFLV), 72-92 (LRTM…EMLV), 102-122 (ALGI…VALL), 134-154 (AIYG…FSAM), and 171-191 (AIAM…TGLV).

It belongs to the NqrDE/RnfAE family. As to quaternary structure, the complex is composed of six subunits: RnfA, RnfB, RnfC, RnfD, RnfE and RnfG.

Its subcellular location is the cell inner membrane. Its function is as follows. Part of a membrane-bound complex that couples electron transfer with translocation of ions across the membrane. This is Ion-translocating oxidoreductase complex subunit A from Shewanella amazonensis (strain ATCC BAA-1098 / SB2B).